The sequence spans 321 residues: Inner membrane protein YtfF (321 aa).

At 1–4 the chain is on the cytoplasmic side; sequence MISG. A helical transmembrane segment spans residues 5–25; sequence VLYALLAGLMWGLIFVGPLIV. One can recognise an EamA domain in the interval 13–141; sequence LMWGLIFVGP…IGIGLACVNI (129 aa). The Periplasmic segment spans residues 26–30; sequence PEYPA. Residues 31 to 51 form a helical membrane-spanning segment; the sequence is MLQSMGRYLALGLIALPIAWL. The Cytoplasmic portion of the chain corresponds to 52-65; sequence GRVRLRQLARRDWL. A helical transmembrane segment spans residues 66-86; the sequence is TALMLTMMGNLIYYFCLASAI. At 87 to 92 the chain is on the periplasmic side; it reads QRTGAP. A helical transmembrane segment spans residues 93–113; it reads VSTMIIGTLPVVIPVFANLLY. Topologically, residues 114 to 120 are cytoplasmic; that stretch reads SQRDGKL. The helical transmembrane segment at 121–141 threads the bilayer; it reads AWGKLAPALICIGIGLACVNI. At 142-154 the chain is on the periplasmic side; sequence AELNHGLPDFDWA. A helical membrane pass occupies residues 155 to 175; that stretch reads RYTSGIVLALVSVVCWAWYAL. The Cytoplasmic segment spans residues 176-194; it reads RNARWLRENPDKHPMMWAT. The chain crosses the membrane as a helical span at residues 195–215; that stretch reads AQALVTLPVSLIGYLVACYWL. Residues 216–230 are Periplasmic-facing; sequence NTQTPDFSLPFGPRP. Residues 231–251 traverse the membrane as a helical segment; that stretch reads LVFISLMVAIAVLCSWVGALC. Residues 252–261 are Cytoplasmic-facing; it reads WNVASQLLPT. The chain crosses the membrane as a helical span at residues 262–282; it reads VILGPLIVFETLAGLLYTFLL. Topologically, residues 283–285 are periplasmic; that stretch reads RQQ. Residues 286–306 traverse the membrane as a helical segment; it reads MPPLMTLSGIALLVIGVVIAV. Residues 307-321 lie on the Cytoplasmic side of the membrane; the sequence is RAKPEKPLTESVSES.

The protein localises to the cell inner membrane. The sequence is that of Inner membrane protein YtfF (ytfF) from Escherichia coli (strain K12).